Here is a 171-residue protein sequence, read N- to C-terminus: Adenine phosphoribosyltransferase (171 aa).

It belongs to the purine/pyrimidine phosphoribosyltransferase family. Homodimer.

The protein localises to the cytoplasm. It carries out the reaction AMP + diphosphate = 5-phospho-alpha-D-ribose 1-diphosphate + adenine. It functions in the pathway purine metabolism; AMP biosynthesis via salvage pathway; AMP from adenine: step 1/1. Its function is as follows. Catalyzes a salvage reaction resulting in the formation of AMP, that is energically less costly than de novo synthesis. In Acidiphilium cryptum (strain JF-5), this protein is Adenine phosphoribosyltransferase.